A 109-amino-acid polypeptide reads, in one-letter code: MKLSIIIIVTSLVIAVVAFPSKDSKAIENDKTEQRMEIVVQETARACSKQIGDKCKRNCECCGKTVVCGTIYVGGKEVNQCMDKTSDNAILNGLGKGMNFIENTFSFCV.

The N-terminal stretch at 1 to 18 (MKLSIIIIVTSLVIAVVA) is a signal peptide. The propeptide occupies 19–46 (FPSKDSKAIENDKTEQRMEIVVQETARA). Intrachain disulfides connect C47–C62, C55–C68, C59–C108, and C61–C81.

The protein belongs to the neurotoxin 25 family. F7 subfamily. As to expression, expressed by the venom gland.

Its subcellular location is the secreted. Functionally, putative ion channel inhibitor. The chain is Hainantoxin-XVIII.2 from Cyriopagopus hainanus (Chinese bird spider).